We begin with the raw amino-acid sequence, 335 residues long: Cathepsin B-like cysteine proteinase 4 (335 aa).

A signal peptide spans 1–15 (MKYLILAALVAVTAG). Positions 16-80 (LVIPLVPKTQ…VVKHDINEDT (65 aa)) are excised as a propeptide. 6 disulfides stabilise this stretch: C94–C123, C106–C150, C142–C209, C143–C146, C179–C213, and C187–C199. Residue C109 is part of the active site. N193 carries an N-linked (GlcNAc...) asparagine glycan. Residues H281 and N301 contribute to the active site.

This sequence belongs to the peptidase C1 family.

It is found in the secreted. Its function is as follows. Thiol protease which shows activity against the fluorogenic substrate z-Arg-Arg-AMC. In Caenorhabditis elegans, this protein is Cathepsin B-like cysteine proteinase 4 (cpr-4).